The following is a 139-amino-acid chain: Large ribosomal subunit protein uL16 (139 aa).

It belongs to the universal ribosomal protein uL16 family. Part of the 50S ribosomal subunit.

Binds 23S rRNA and is also seen to make contacts with the A and possibly P site tRNAs. This is Large ribosomal subunit protein uL16 from Chlorobium phaeobacteroides (strain BS1).